Here is a 552-residue protein sequence, read N- to C-terminus: CTP synthase (552 aa).

The tract at residues 1–270 (MTKYVFVTGG…DRIICEELKL (270 aa)) is amidoligase domain. Residue Ser13 participates in CTP binding. Ser13 contributes to the UTP binding site. ATP-binding positions include 14-19 (SLGKGI) and Asp71. Mg(2+) contacts are provided by Asp71 and Glu144. Residues 151–153 (DIE), 191–196 (KTKPTQ), and Lys227 each bind CTP. UTP contacts are provided by residues 191-196 (KTKPTQ) and Lys227. A Glutamine amidotransferase type-1 domain is found at 295–547 (TIGMVGKYVD…VEAALANKQA (253 aa)). Gly356 provides a ligand contact to L-glutamine. Cys383 functions as the Nucleophile; for glutamine hydrolysis in the catalytic mechanism. L-glutamine contacts are provided by residues 384 to 387 (LGMQ), Glu407, and Arg473. Active-site residues include His520 and Glu522.

This sequence belongs to the CTP synthase family. Homotetramer.

It carries out the reaction UTP + L-glutamine + ATP + H2O = CTP + L-glutamate + ADP + phosphate + 2 H(+). It catalyses the reaction L-glutamine + H2O = L-glutamate + NH4(+). The enzyme catalyses UTP + NH4(+) + ATP = CTP + ADP + phosphate + 2 H(+). Its pathway is pyrimidine metabolism; CTP biosynthesis via de novo pathway; CTP from UDP: step 2/2. With respect to regulation, allosterically activated by GTP, when glutamine is the substrate; GTP has no effect on the reaction when ammonia is the substrate. The allosteric effector GTP functions by stabilizing the protein conformation that binds the tetrahedral intermediate(s) formed during glutamine hydrolysis. Inhibited by the product CTP, via allosteric rather than competitive inhibition. Functionally, catalyzes the ATP-dependent amination of UTP to CTP with either L-glutamine or ammonia as the source of nitrogen. Regulates intracellular CTP levels through interactions with the four ribonucleotide triphosphates. This Burkholderia cenocepacia (strain ATCC BAA-245 / DSM 16553 / LMG 16656 / NCTC 13227 / J2315 / CF5610) (Burkholderia cepacia (strain J2315)) protein is CTP synthase.